A 607-amino-acid chain; its full sequence is CUB and zona pellucida-like domain-containing protein 1 (607 aa).

An N-terminal signal peptide occupies residues methionine 1 to alanine 19. Topologically, residues glutamine 20–histidine 568 are lumenal. N-linked (GlcNAc...) asparagine glycosylation is present at asparagine 22. Cysteine 32 and cysteine 58 are oxidised to a cystine. 2 CUB domains span residues cysteine 32–serine 146 and cysteine 154–threonine 265. Residue asparagine 67 is glycosylated (N-linked (GlcNAc...) asparagine). Intrachain disulfides connect cysteine 85-cysteine 107 and cysteine 154-cysteine 180. Asparagine 195 carries an N-linked (GlcNAc...) asparagine glycan. An intrachain disulfide couples cysteine 207 to cysteine 229. The ZP domain maps to serine 276–arginine 519. Residue asparagine 419 is glycosylated (N-linked (GlcNAc...) asparagine). The cysteines at positions 442 and 498 are disulfide-linked. A helical membrane pass occupies residues leucine 569–valine 589. Topologically, residues arginine 590–tyrosine 607 are cytoplasmic.

As to expression, expressed predominantly in epithelium of uterus and oviduct.

It is found in the zymogen granule membrane. Functionally, localized to zymogen granules, where it functions in trypsinogen activation. May indirectly regulate cell motility, cell-cell and cell/extracellular matrix interactions. This is CUB and zona pellucida-like domain-containing protein 1 from Rattus norvegicus (Rat).